A 158-amino-acid polypeptide reads, in one-letter code: MAKEQGRKLIAQNRRARHDWSVLDTYETGIVLTGTEVKSLRQGKASLVDGFATVDRGEVWLRNVHIPEYTEGTWTNHEPRRSRKLLLHKGEIIRLIGKIQESGLSLIPLSLYFSDGKAKVELALAKGKKAHDKRQDLAKKDAQREIERAMGRARKGKW.

This sequence belongs to the SmpB family.

Its subcellular location is the cytoplasm. Its function is as follows. Required for rescue of stalled ribosomes mediated by trans-translation. Binds to transfer-messenger RNA (tmRNA), required for stable association of tmRNA with ribosomes. tmRNA and SmpB together mimic tRNA shape, replacing the anticodon stem-loop with SmpB. tmRNA is encoded by the ssrA gene; the 2 termini fold to resemble tRNA(Ala) and it encodes a 'tag peptide', a short internal open reading frame. During trans-translation Ala-aminoacylated tmRNA acts like a tRNA, entering the A-site of stalled ribosomes, displacing the stalled mRNA. The ribosome then switches to translate the ORF on the tmRNA; the nascent peptide is terminated with the 'tag peptide' encoded by the tmRNA and targeted for degradation. The ribosome is freed to recommence translation, which seems to be the essential function of trans-translation. This Saccharopolyspora erythraea (strain ATCC 11635 / DSM 40517 / JCM 4748 / NBRC 13426 / NCIMB 8594 / NRRL 2338) protein is SsrA-binding protein.